A 231-amino-acid polypeptide reads, in one-letter code: Ubiquinone biosynthesis protein coq-4, mitochondrial (231 aa).

Residues His-133, Asp-134, His-137, and Glu-149 each contribute to the Zn(2+) site.

This sequence belongs to the COQ4 family. In terms of assembly, component of a multi-subunit COQ enzyme complex. Requires Zn(2+) as cofactor.

Its subcellular location is the mitochondrion inner membrane. The catalysed reaction is a 4-hydroxy-3-methoxy-5-(all-trans-polyprenyl)benzoate + H(+) = a 2-methoxy-6-(all-trans-polyprenyl)phenol + CO2. It participates in cofactor biosynthesis; ubiquinone biosynthesis. Lyase that catalyzes the C1-decarboxylation of 4-hydroxy-3-methoxy-5-(all-trans-polyprenyl)benzoic acid into 2-methoxy-6-(all-trans-polyprenyl)phenol during ubiquinone biosynthesis. In Caenorhabditis elegans, this protein is Ubiquinone biosynthesis protein coq-4, mitochondrial.